The following is a 430-amino-acid chain: Terminal nucleotidyltransferase 5B (430 aa).

Residues 1–46 (MMPSESETESRDRAAAQVGTAAAAAVAKAAPAGGGPDPEASSASLG) form a disordered region. A compositionally biased stretch (low complexity) spans 15 to 44 (AAQVGTAAAAAVAKAAPAGGGPDPEASSAS).

This sequence belongs to the TENT family.

Its subcellular location is the cytoplasm. The protein resides in the nucleus. It carries out the reaction RNA(n) + ATP = RNA(n)-3'-adenine ribonucleotide + diphosphate. Functionally, catalyzes the transfer of one adenosine molecule from an ATP to an mRNA poly(A) tail bearing a 3'-OH terminal group in an ATP hydrolysis-dependent manner. May be involved in maintaining the translation efficiency of at least some genes through preventing degradation of their mRNAs. Prefers RNA molecules that are adenosine-rich close to 3'-end. In addition, may inhibit cell proliferation and cell cycle progression through ubiquitination of beta-catenin/CTNNB1. The polypeptide is Terminal nucleotidyltransferase 5B (Bos taurus (Bovine)).